Reading from the N-terminus, the 773-residue chain is Carnitine O-palmitoyltransferase 1, liver isoform (773 aa).

Residue A2 is modified to N-acetylalanine. Residues 2 to 47 lie on the Cytoplasmic side of the membrane; it reads AEAHQAVAFQFTVTPDGIDLRLSHEALKQICLSGLHSWKKKFIRFK. A helical membrane pass occupies residues 48 to 73; sequence NGIITGVFPANPSSWLIVVVGVISSM. Over 74–102 the chain is Mitochondrial intermembrane; the sequence is HAKVDPSLGMIAKISRTLDTTGRMSSQTK. A helical membrane pass occupies residues 103–122; sequence NIVSGVLFGTGLWVAVIMTM. The Cytoplasmic segment spans residues 123 to 773; that stretch reads RYSLKVLLSY…LFGLTINSKK (651 aa). Y282 carries the 3'-nitrotyrosine modification. Catalysis depends on H473, which acts as the Proton acceptor. Residue 555-567 coordinates CoA; that stretch reads GKGLIKKCRTSPD. T588 bears the Phosphothreonine mark. Y589 carries the 3'-nitrotyrosine modification. Residues Y589 and T602 each contribute to the (R)-carnitine site. T604 carries the phosphothreonine modification. Phosphoserine is present on residues S741 and S747.

The protein belongs to the carnitine/choline acetyltransferase family. In terms of assembly, homohexamer and homotrimer. Identified in a complex that contains at least CPT1A, ACSL1 and VDAC1. Also identified in complexes with ACSL1 and VDAC2 and VDAC3. Interacts with ZDHHC4. Liver and kidney.

Its subcellular location is the mitochondrion outer membrane. The enzyme catalyses (R)-carnitine + hexadecanoyl-CoA = O-hexadecanoyl-(R)-carnitine + CoA. It catalyses the reaction succinyl-CoA + L-lysyl-[protein] = N(6)-succinyl-L-lysyl-[protein] + CoA + H(+). It participates in lipid metabolism; fatty acid beta-oxidation. Its activity is regulated as follows. Inhibited by malonyl-CoA. Catalyzes the transfer of the acyl group of long-chain fatty acid-CoA conjugates onto carnitine, an essential step for the mitochondrial uptake of long-chain fatty acids and their subsequent beta-oxidation in the mitochondrion. Also possesses a lysine succinyltransferase activity that can regulate enzymatic activity of substrate proteins such as ENO1 and metabolism independent of its classical carnitine O-palmitoyltransferase activity. Plays an important role in hepatic triglyceride metabolism. Also plays a role in inducible regulatory T-cell (iTreg) differentiation once activated by butyryl-CoA that antagonizes malonyl-CoA-mediated CPT1A repression. Sustains the IFN-I response by recruiting ZDHCC4 to palmitoylate MAVS at the mitochondria leading to MAVS stabilization and activation. This chain is Carnitine O-palmitoyltransferase 1, liver isoform (Cpt1a), found in Rattus norvegicus (Rat).